A 341-amino-acid chain; its full sequence is Ribose-phosphate pyrophosphokinase 5 (341 aa).

Positions 152, 154, and 167 each coordinate Mg(2+).

It belongs to the ribose-phosphate pyrophosphokinase family.

Its subcellular location is the cytoplasm. It catalyses the reaction D-ribose 5-phosphate + ATP = 5-phospho-alpha-D-ribose 1-diphosphate + AMP + H(+). It participates in metabolic intermediate biosynthesis; 5-phospho-alpha-D-ribose 1-diphosphate biosynthesis; 5-phospho-alpha-D-ribose 1-diphosphate from D-ribose 5-phosphate (route I): step 1/1. Functionally, 5-phosphoribose 1-diphosphate synthase involved in nucleotide, histidine, and tryptophan biosynthesis. Active in heteromultimeric complexes with other 5-phosphoribose 1-diphosphate synthases. The polypeptide is Ribose-phosphate pyrophosphokinase 5 (Schizosaccharomyces pombe (strain 972 / ATCC 24843) (Fission yeast)).